A 213-amino-acid polypeptide reads, in one-letter code: Orotate phosphoribosyltransferase (213 aa).

5-phospho-alpha-D-ribose 1-diphosphate is bound at residue K26. Orotate is bound at residue 34-35; it reads FF. 5-phospho-alpha-D-ribose 1-diphosphate is bound by residues 72–73, R98, K99, K102, and 123–131; these read YK and DDVISAGTS. The orotate site is built by S127 and R155.

It belongs to the purine/pyrimidine phosphoribosyltransferase family. PyrE subfamily. In terms of assembly, homodimer. Mg(2+) is required as a cofactor.

It carries out the reaction orotidine 5'-phosphate + diphosphate = orotate + 5-phospho-alpha-D-ribose 1-diphosphate. It functions in the pathway pyrimidine metabolism; UMP biosynthesis via de novo pathway; UMP from orotate: step 1/2. In terms of biological role, catalyzes the transfer of a ribosyl phosphate group from 5-phosphoribose 1-diphosphate to orotate, leading to the formation of orotidine monophosphate (OMP). This is Orotate phosphoribosyltransferase from Neisseria gonorrhoeae (strain NCCP11945).